Reading from the N-terminus, the 261-residue chain is Adenosylcobinamide-GDP ribazoletransferase (261 aa).

The next 5 helical transmembrane spans lie at 31 to 51 (YAICFFPLIGAVIGGVFFLTF), 59 to 79 (LGDILIAALLTSIPILISGGI), 125 to 145 (FGMVSVLTLKSSIIIAIFFVV), 183 to 203 (VIYLVITVIGMLLVSPILTVV), and 240 to 260 (LMAGLAVVIAEGVIIYGTGHW).

It belongs to the CobS family. Requires Mg(2+) as cofactor.

It is found in the cell membrane. It catalyses the reaction alpha-ribazole + adenosylcob(III)inamide-GDP = adenosylcob(III)alamin + GMP + H(+). It carries out the reaction alpha-ribazole 5'-phosphate + adenosylcob(III)inamide-GDP = adenosylcob(III)alamin 5'-phosphate + GMP + H(+). Its pathway is cofactor biosynthesis; adenosylcobalamin biosynthesis; adenosylcobalamin from cob(II)yrinate a,c-diamide: step 7/7. Joins adenosylcobinamide-GDP and alpha-ribazole to generate adenosylcobalamin (Ado-cobalamin). Also synthesizes adenosylcobalamin 5'-phosphate from adenosylcobinamide-GDP and alpha-ribazole 5'-phosphate. The sequence is that of Adenosylcobinamide-GDP ribazoletransferase from Lachnoclostridium phytofermentans (strain ATCC 700394 / DSM 18823 / ISDg) (Clostridium phytofermentans).